Reading from the N-terminus, the 298-residue chain is Probable pyridoxal 5'-phosphate synthase subunit SNZ3 (298 aa).

Position 21 (Asp-21) interacts with D-ribose 5-phosphate. Lys-78 (schiff-base intermediate with D-ribose 5-phosphate) is an active-site residue. D-ribose 5-phosphate is bound by residues Gly-150, Gly-213, and 234–235 (GS).

This sequence belongs to the PdxS/SNZ family. Homohexamer. Interacts with THI11.

It catalyses the reaction aldehydo-D-ribose 5-phosphate + D-glyceraldehyde 3-phosphate + L-glutamine = pyridoxal 5'-phosphate + L-glutamate + phosphate + 3 H2O + H(+). It functions in the pathway cofactor biosynthesis; pyridoxal 5'-phosphate biosynthesis. Its function is as follows. Catalyzes the formation of pyridoxal 5'-phosphate from ribose 5-phosphate (RBP), glyceraldehyde 3-phosphate (G3P) and ammonia. The ammonia is provided by a SNO isoform. Can also use ribulose 5-phosphate and dihydroxyacetone phosphate as substrates, resulting from enzyme-catalyzed isomerization of RBP and G3P, respectively. The protein is Probable pyridoxal 5'-phosphate synthase subunit SNZ3 (SNZ3) of Saccharomyces cerevisiae (strain ATCC 204508 / S288c) (Baker's yeast).